A 928-amino-acid polypeptide reads, in one-letter code: RhoGEF domain-containing protein gxcH (928 aa).

A compositionally biased stretch (low complexity) spans 30–48 (SKSFDNNNNNNSNTNNIKN). Disordered regions lie at residues 30 to 76 (SKSF…PPVP), 90 to 201 (ITNY…PPLG), and 318 to 410 (DNGV…NKDT). A compositionally biased stretch (polar residues) spans 93–103 (YIPTTPPSINI). The span at 112–123 (DNYDDNYDDNYS) shows a compositional bias: acidic residues. Polar residues-rich tracts occupy residues 129 to 141 (TSTT…SPEF), 175 to 187 (ETFN…EGLQ), and 334 to 367 (KSGT…NLRG). A compositionally biased stretch (low complexity) spans 377-407 (NQTTNKNNSNNNNNNTTTNNNNNNNNNNNNN). The region spanning 484-671 (IFNKVVKEII…GKIVSDINGK (188 aa)) is the DH domain. Positions 699 to 807 (FIGEGKVKKV…NKIEDQIVSE (109 aa)) are PH-like. The disordered stretch occupies residues 835–928 (SDSQSDFVDH…NTEPENFSFY (94 aa)). A compositionally biased stretch (low complexity) spans 848–857 (QEQQEQQQQQ).

GTPase-activating protein. In Dictyostelium discoideum (Social amoeba), this protein is RhoGEF domain-containing protein gxcH (gxcH).